Here is a 341-residue protein sequence, read N- to C-terminus: Methionine import ATP-binding protein MetN 2 (341 aa).

Positions 2–241 constitute an ABC transporter domain; that stretch reads IQFKNISKHY…PQHPTTKTFI (240 aa). Residue 38–45 coordinates ATP; the sequence is GYSGAGKS.

Belongs to the ABC transporter superfamily. Methionine importer (TC 3.A.1.24) family. As to quaternary structure, the complex is composed of two ATP-binding proteins (MetN), two transmembrane proteins (MetI) and a solute-binding protein (MetQ).

It is found in the cell inner membrane. It catalyses the reaction L-methionine(out) + ATP + H2O = L-methionine(in) + ADP + phosphate + H(+). It carries out the reaction D-methionine(out) + ATP + H2O = D-methionine(in) + ADP + phosphate + H(+). Part of the ABC transporter complex MetNIQ involved in methionine import. Responsible for energy coupling to the transport system. The polypeptide is Methionine import ATP-binding protein MetN 2 (Acinetobacter baylyi (strain ATCC 33305 / BD413 / ADP1)).